Consider the following 557-residue polypeptide: Eukaryotic translation initiation factor 3 subunit D-2 (557 aa).

An RNA gate region spans residues 292–306 (QFDMLTVNETALEPP). The tract at residues 533-557 (FDSDNNDGEETSDDRPFLNSKDNKL) is disordered. The span at 545–557 (DDRPFLNSKDNKL) shows a compositional bias: basic and acidic residues.

This sequence belongs to the eIF-3 subunit D family. As to quaternary structure, component of the eukaryotic translation initiation factor 3 (eIF-3) complex. The eIF-3 complex interacts with pix.

The protein localises to the cytoplasm. Functionally, mRNA cap-binding component of the eukaryotic translation initiation factor 3 (eIF-3) complex, which is involved in protein synthesis of a specialized repertoire of mRNAs and, together with other initiation factors, stimulates binding of mRNA and methionyl-tRNAi to the 40S ribosome. The eIF-3 complex specifically targets and initiates translation of a subset of mRNAs involved in cell proliferation. In the eIF-3 complex, eif3d specifically recognizes and binds the 7-methylguanosine cap of a subset of mRNAs. The chain is Eukaryotic translation initiation factor 3 subunit D-2 from Drosophila grimshawi (Hawaiian fruit fly).